Here is a 532-residue protein sequence, read N- to C-terminus: Cocaine esterase (532 aa).

Glutamine 1 is modified (pyrrolidone carboxylic acid). The cysteines at positions 69 and 96 are disulfide-linked. Serine 201 functions as the Acyl-ester intermediate in the catalytic mechanism. The N-linked (GlcNAc...) asparagine glycan is linked to asparagine 249. A disulfide bridge links cysteine 253 with cysteine 264. Residues glutamate 318 and histidine 430 each act as charge relay system in the active site. The Prevents secretion from ER motif lies at 529–532 (HTEL).

The protein belongs to the type-B carboxylesterase/lipase family. Monomer.

The protein localises to the endoplasmic reticulum lumen. It carries out the reaction a carboxylic ester + H2O = an alcohol + a carboxylate + H(+). The catalysed reaction is cocaine + H2O = ecgonine methyl ester + benzoate + H(+). The enzyme catalyses 2-(5Z,8Z,11Z,14Z-eicosatetraenoyl)-glycerol + H2O = glycerol + (5Z,8Z,11Z,14Z)-eicosatetraenoate + H(+). It catalyses the reaction prostaglandin E2 1-glyceryl ester + H2O = prostaglandin E2 + glycerol + H(+). It carries out the reaction prostaglandin F2alpha 1-glyceryl ester + H2O = prostaglandin F2alpha + glycerol + H(+). Its function is as follows. Involved in the detoxification of xenobiotics and in the activation of ester and amide prodrugs. Converts monoacylglycerides to free fatty acids and glycerol. Hydrolyzes of 2-arachidonoylglycerol and prostaglandins. The polypeptide is Cocaine esterase (CES2) (Oryctolagus cuniculus (Rabbit)).